A 164-amino-acid chain; its full sequence is Putative 4-hydroxy-4-methyl-2-oxoglutarate aldolase (164 aa).

Substrate is bound by residues 75-78 and Arg-97; that span reads GDLI. Position 98 (Asp-98) interacts with a divalent metal cation.

Belongs to the class II aldolase/RraA-like family. In terms of assembly, homotrimer. Requires a divalent metal cation as cofactor.

The enzyme catalyses 4-hydroxy-4-methyl-2-oxoglutarate = 2 pyruvate. It carries out the reaction oxaloacetate + H(+) = pyruvate + CO2. Its function is as follows. Catalyzes the aldol cleavage of 4-hydroxy-4-methyl-2-oxoglutarate (HMG) into 2 molecules of pyruvate. Also contains a secondary oxaloacetate (OAA) decarboxylase activity due to the common pyruvate enolate transition state formed following C-C bond cleavage in the retro-aldol and decarboxylation reactions. This Shewanella oneidensis (strain ATCC 700550 / JCM 31522 / CIP 106686 / LMG 19005 / NCIMB 14063 / MR-1) protein is Putative 4-hydroxy-4-methyl-2-oxoglutarate aldolase.